Reading from the N-terminus, the 344-residue chain is Golgi-associated RAB2 interactor protein 1B (344 aa).

The interval 271 to 293 (FRSSRKVETNKNSSGKDSSREDS) is disordered.

The protein belongs to the GARIN family.

The protein resides in the golgi apparatus. Its function is as follows. RAB2B effector protein required for accurate acrosome formation and normal male fertility. In complex with RAB2A/RAB2B, seems to suppress excessive vesicle trafficking during acrosome formation. This is Golgi-associated RAB2 interactor protein 1B from Homo sapiens (Human).